The primary structure comprises 624 residues: Chaperone protein HtpG (624 aa).

Residues 1–341 (MAVKQFKAES…SPDLSLNISR (341 aa)) form an a; substrate-binding region. The b stretch occupies residues 342–550 (ELLQHDRQLK…DGELSIEMEK (209 aa)). A c region spans residues 551-624 (VLKMMPDNNN…FANDVASLMK (74 aa)).

This sequence belongs to the heat shock protein 90 family. As to quaternary structure, homodimer.

It localises to the cytoplasm. Functionally, molecular chaperone. Has ATPase activity. This is Chaperone protein HtpG from Clostridium acetobutylicum (strain ATCC 824 / DSM 792 / JCM 1419 / IAM 19013 / LMG 5710 / NBRC 13948 / NRRL B-527 / VKM B-1787 / 2291 / W).